The following is a 157-amino-acid chain: Parasitophorous vacuole membrane protein S16 (157 aa).

The first 25 residues, 1-25, serve as a signal peptide directing secretion; it reads MNIRKFIPSLALMLIFFAFANLVLS. Residues 26–105 are Extracellular-facing; that stretch reads DANDKAKKPA…DKKTTVNRNL (80 aa). The segment at 30-74 is disordered; it reads KAKKPAGKGSPSTLQTPGSSSGASLHAVGPNQGGLSQGLSGKDSA. Positions 39–52 are enriched in polar residues; that stretch reads SPSTLQTPGSSSGA. The chain crosses the membrane as a helical span at residues 106–126; the sequence is IISTAVTNMIMLIILSGIVGF. Topologically, residues 127 to 157 are cytoplasmic; it reads KVKKTKNADDDKGDKDKDKDNTDEGDEGDDS. The tract at residues 130–157 is disordered; it reads KTKNADDDKGDKDKDKDNTDEGDEGDDS. Over residues 132–148 the composition is skewed to basic and acidic residues; it reads KNADDDKGDKDKDKDNT.

The protein localises to the parasitophorous vacuole membrane. The protein resides in the vacuole. Functionally, involved in male gametogenesis. Required for exflagellation of male gametocytes. May play a role in parasite transmission in the mosquito. Binds to the mosquito vector midgut. This is Parasitophorous vacuole membrane protein S16 from Plasmodium falciparum (isolate 3D7).